The following is a 24-amino-acid chain: Small ribosomal subunit protein uS19c (24 aa).

The protein belongs to the universal ribosomal protein uS19 family.

The protein resides in the plastid. The protein localises to the chloroplast. In terms of biological role, protein S19 forms a complex with S13 that binds strongly to the 16S ribosomal RNA. The sequence is that of Small ribosomal subunit protein uS19c (rps19) from Petunia hybrida (Petunia).